The sequence spans 70 residues: Small ribosomal subunit protein bS21 (70 aa).

The protein belongs to the bacterial ribosomal protein bS21 family.

The sequence is that of Small ribosomal subunit protein bS21 from Nautilia profundicola (strain ATCC BAA-1463 / DSM 18972 / AmH).